The primary structure comprises 266 residues: Regulatory protein RecX (266 aa).

This sequence belongs to the RecX family.

Its subcellular location is the cytoplasm. Modulates RecA activity. This is Regulatory protein RecX from Levilactobacillus brevis (strain ATCC 367 / BCRC 12310 / CIP 105137 / JCM 1170 / LMG 11437 / NCIMB 947 / NCTC 947) (Lactobacillus brevis).